The chain runs to 519 residues: Serine/threonine-protein kinase RIO1 (519 aa).

The segment covering 1-10 (MTPAPEPQDP) has biased composition (pro residues). The tract at residues 1 to 54 (MTPAPEPQDPPTIHEPVATEQTDDISDWDVESDYEDGYGAPSKSQAQGGASAAD) is disordered. Positions 21–36 (QTDDISDWDVESDYED) are enriched in acidic residues. Residues 39–53 (GAPSKSQAQGGASAA) are compositionally biased toward low complexity. One can recognise a Protein kinase domain in the interval 122-519 (SEIYGTISTG…KLVAANKKRK (398 aa)). ATP is bound by residues K154 and L228. Residue D281 is the Proton acceptor of the active site. Mg(2+) is bound by residues N286 and D298. D298 serves as the catalytic 4-aspartylphosphate intermediate. The segment at 418-519 (ADSKVPESTG…KLVAANKKRK (102 aa)) is disordered. Residues 439–464 (GSEDEEGDEGESGEVESGDEEREEGE) show a composition bias toward acidic residues. The association with (pre-)40S ribosomal particle stretch occupies residues 440–519 (SEDEEGDEGE…KLVAANKKRK (80 aa)). Basic residues-rich tracts occupy residues 470 to 489 (KKRP…AHKM) and 497 to 519 (EKRK…KKRK).

The protein belongs to the protein kinase superfamily. RIO-type Ser/Thr kinase family. Mg(2+) is required as a cofactor. Autophosphorylated.

The protein localises to the cytoplasm. The catalysed reaction is L-seryl-[protein] + ATP = O-phospho-L-seryl-[protein] + ADP + H(+). The enzyme catalyses L-threonyl-[protein] + ATP = O-phospho-L-threonyl-[protein] + ADP + H(+). It carries out the reaction ATP + H2O = ADP + phosphate + H(+). Functionally, involved in the final steps of cytoplasmic maturation of the 40S ribosomal subunit. In vitro, has strong ATPase activity and only low protein kinase activity. This chain is Serine/threonine-protein kinase RIO1, found in Chaetomium thermophilum (strain DSM 1495 / CBS 144.50 / IMI 039719) (Thermochaetoides thermophila).